The sequence spans 77 residues: Acyl carrier protein (77 aa).

The region spanning 2–77 (STVEERVKKI…DAIDYIVAHT (76 aa)) is the Carrier domain. The residue at position 37 (Ser37) is an O-(pantetheine 4'-phosphoryl)serine.

This sequence belongs to the acyl carrier protein (ACP) family. 4'-phosphopantetheine is transferred from CoA to a specific serine of apo-ACP by AcpS. This modification is essential for activity because fatty acids are bound in thioester linkage to the sulfhydryl of the prosthetic group.

It is found in the cytoplasm. It participates in lipid metabolism; fatty acid biosynthesis. Carrier of the growing fatty acid chain in fatty acid biosynthesis. In Marinobacter nauticus (strain ATCC 700491 / DSM 11845 / VT8) (Marinobacter aquaeolei), this protein is Acyl carrier protein.